Here is a 275-residue protein sequence, read N- to C-terminus: Phosphonoacetaldehyde hydrolase (275 aa).

Residue Asp-15 is the Nucleophile of the active site. Positions 15 and 17 each coordinate Mg(2+). Residue Lys-56 is the Schiff-base intermediate with substrate of the active site. A Mg(2+)-binding site is contributed by Asp-189.

It belongs to the HAD-like hydrolase superfamily. PhnX family. Homodimer. Mg(2+) serves as cofactor.

The catalysed reaction is phosphonoacetaldehyde + H2O = acetaldehyde + phosphate + H(+). In terms of biological role, involved in phosphonate degradation. The polypeptide is Phosphonoacetaldehyde hydrolase (Pseudomonas paraeruginosa (strain DSM 24068 / PA7) (Pseudomonas aeruginosa (strain PA7))).